Here is a 377-residue protein sequence, read N- to C-terminus: Chaperone protein DnaJ (377 aa).

Residues 5–70 enclose the J domain; that stretch reads DYYEVLGLQK…QKRAAYDQYG (66 aa). The CR-type zinc finger occupies 134-212; sequence GCKKDIRLST…CHGDGRVQKA (79 aa). The Zn(2+) site is built by Cys-147, Cys-150, Cys-164, Cys-167, Cys-186, Cys-189, Cys-200, and Cys-203. CXXCXGXG motif repeat units lie at residues 147–154, 164–171, 186–193, and 200–207; these read CDNCHGTG, CPHCHGAG, CPSCHGTG, and CHSCHGDG.

This sequence belongs to the DnaJ family. As to quaternary structure, homodimer. Requires Zn(2+) as cofactor.

The protein localises to the cytoplasm. Its function is as follows. Participates actively in the response to hyperosmotic and heat shock by preventing the aggregation of stress-denatured proteins and by disaggregating proteins, also in an autonomous, DnaK-independent fashion. Unfolded proteins bind initially to DnaJ; upon interaction with the DnaJ-bound protein, DnaK hydrolyzes its bound ATP, resulting in the formation of a stable complex. GrpE releases ADP from DnaK; ATP binding to DnaK triggers the release of the substrate protein, thus completing the reaction cycle. Several rounds of ATP-dependent interactions between DnaJ, DnaK and GrpE are required for fully efficient folding. Also involved, together with DnaK and GrpE, in the DNA replication of plasmids through activation of initiation proteins. The sequence is that of Chaperone protein DnaJ from Haemophilus ducreyi (strain 35000HP / ATCC 700724).